The primary structure comprises 155 residues: Lipoprotein signal peptidase (155 aa).

The next 2 helical transmembrane spans lie at 52–72 (ILQGQMWFFYVITLVVIAGIV) and 85–105 (LGVALALMLGGAIGNFIDRVF). Catalysis depends on residues D111 and D129. The chain crosses the membrane as a helical span at residues 124 to 144 (IFNIADSSLCVGVILLFIQML).

Belongs to the peptidase A8 family.

The protein resides in the cell membrane. It carries out the reaction Release of signal peptides from bacterial membrane prolipoproteins. Hydrolyzes -Xaa-Yaa-Zaa-|-(S,diacylglyceryl)Cys-, in which Xaa is hydrophobic (preferably Leu), and Yaa (Ala or Ser) and Zaa (Gly or Ala) have small, neutral side chains.. It participates in protein modification; lipoprotein biosynthesis (signal peptide cleavage). This protein specifically catalyzes the removal of signal peptides from prolipoproteins. In Bacillus pumilus (strain SAFR-032), this protein is Lipoprotein signal peptidase.